Reading from the N-terminus, the 115-residue chain is Con-Ins G1b (115 aa).

An N-terminal signal peptide occupies residues 1-24 (MTTSFYFLLMALGLLLYVCQSSFG). A propeptide spanning residues 25-29 (NQHTR) is cleaved from the precursor. P34 bears the 4-hydroxyproline; partial mark. Intrachain disulfides connect C38-C101, C50-C114, and C100-C105. Position 41 is a 4-carboxyglutamate (E41). The propeptide at 52 to 94 (RKRNDAGEKRGRASPLWQRRGFLSKLKARAKRNGAFHLPRDGR) is c peptide. E98 carries the 4-carboxyglutamate modification. Position 104 is a 4-hydroxyproline; partial (P104). 4-carboxyglutamate; partial is present on E109. A Cysteine amide modification is found at C114.

Belongs to the insulin family. In terms of assembly, heterodimer of A and B chains; disulfide-linked. As to expression, expressed by the venom gland.

The protein resides in the secreted. Functionally, this venom insulin, from a fish-hunting cone snail, facilitates prey capture by rapidly inducing hypoglycemic shock. It is one of the smallest known insulin found in nature and lacks the C-terminal segment of the B chain that, in human insulin, mediates engagement of the insulin receptor (INSR) and assembly of the hormone's hexameric storage form. Despite lacking this segment, it both binds and activates human insulin receptor (long isoform (HIR-B) of INSR) with only a 10-fold lower potency. In vivo, intraperitoneal injection of this peptide into zebrafish lowers blood glucose with the same potency than human insulin. In addition, when applied to water, this peptide reduces overall locomotor activity of zebrafish larvae, observed as a significant decrease in the percentage of time spent swimming and movement frequency. This is Con-Ins G1b from Conus geographus (Geography cone).